Consider the following 112-residue polypeptide: MNKNMAGILSAAAVLTMLAGCTAYDRTKDQFVQPVVKDVKKGMSRAQVAQIAGKPSSEVSMIHARGTCQTYILGQRDGKAETYFVALDDTGHVINSGYQTCAEYDTDPQAAK.

Residues 1-20 (MNKNMAGILSAAAVLTMLAG) form the signal peptide. The N-palmitoyl cysteine moiety is linked to residue Cys-21. Cys-21 carries the S-diacylglycerol cysteine lipid modification.

The protein resides in the cell inner membrane. The chain is Osmotically-inducible putative lipoprotein OsmE (osmE) from Escherichia coli O157:H7.